The following is a 343-amino-acid chain: Ion-translocating oxidoreductase complex subunit D (343 aa).

4 helical membrane passes run 24 to 44 (VLLA…AGTL), 45 to 65 (YNLA…LAAR), 69 to 91 (LAFF…ALPP), and 124 to 144 (AMLG…SWPA). An FMN phosphoryl threonine modification is found at T171. Helical transmembrane passes span 197 to 217 (FGGA…LYLL), 221 to 241 (LITW…SLLF), 251 to 271 (GSPL…FIVT), 284 to 304 (LVFG…GGYP), and 305 to 325 (DAVA…DYYT).

The protein belongs to the NqrB/RnfD family. In terms of assembly, the complex is composed of six subunits: RnfA, RnfB, RnfC, RnfD, RnfE and RnfG. FMN is required as a cofactor.

Its subcellular location is the cell inner membrane. Its function is as follows. Part of a membrane-bound complex that couples electron transfer with translocation of ions across the membrane. The protein is Ion-translocating oxidoreductase complex subunit D of Ectopseudomonas mendocina (strain ymp) (Pseudomonas mendocina).